The following is an 80-amino-acid chain: U6-ctenitoxin-Pn1a (80 aa).

Residues 1–21 (MWLKIQVFVLALALITLGIQA) form the signal peptide. Positions 22-37 (EPNSGPNNPLIQEEAR) are excised as a propeptide. 4 disulfide bridges follow: cysteine 39-cysteine 54, cysteine 46-cysteine 59, cysteine 53-cysteine 69, and cysteine 61-cysteine 67. Positions 72–80 (TLGDLFGRR) are excised as a propeptide.

The protein belongs to the neurotoxin 02 (plectoxin) family. 01 (Tx3) subfamily. As to expression, expressed by the venom gland.

The protein localises to the secreted. Functionally, antagonist of L-type calcium channels (Cav1/CACNA1). The sequence is that of U6-ctenitoxin-Pn1a from Phoneutria nigriventer (Brazilian armed spider).